We begin with the raw amino-acid sequence, 394 residues long: Aspergillopepsin-1 (394 aa).

Positions 1 to 20 (MVVFSKTAALVLGLSTAVSA) are cleaved as a signal peptide. Residues 21–69 (APAPTRKGFTINQIARPANKTRTVNLPGLYARSLAKFGGTVPQSVKEAA) constitute a propeptide, activation peptide. Residues 85-391 (YLTPVTVGKS…NSEGPKLGFA (307 aa)) enclose the Peptidase A1 domain. Residues Asp101 and Asp283 contribute to the active site. Cys319 and Cys354 are disulfide-bonded.

It belongs to the peptidase A1 family.

The protein resides in the secreted. It catalyses the reaction Hydrolysis of proteins with broad specificity. Generally favors hydrophobic residues in P1 and P1', but also accepts Lys in P1, which leads to activation of trypsinogen. Does not clot milk.. Functionally, secreted aspartic endopeptidase that allows assimilation of proteinaceous substrates. The scissile peptide bond is attacked by a nucleophilic water molecule activated by two aspartic residues in the active site. Shows a broad primary substrate specificity. Favors hydrophobic residues at the P1 and P1' positions, but also accepts a lysine residue in the P1 position, leading to the activation of trypsinogen and chymotrypsinogen A. The polypeptide is Aspergillopepsin-1 (Aspergillus niger).